We begin with the raw amino-acid sequence, 208 residues long: Thymidylate kinase (208 aa).

10 to 17 serves as a coordination point for ATP; sequence GPEGSGKT.

The protein belongs to the thymidylate kinase family.

The catalysed reaction is dTMP + ATP = dTDP + ADP. Phosphorylation of dTMP to form dTDP in both de novo and salvage pathways of dTTP synthesis. The sequence is that of Thymidylate kinase from Bacillus cereus (strain Q1).